A 239-amino-acid polypeptide reads, in one-letter code: 4-hydroxy-tetrahydrodipicolinate reductase (239 aa).

Residues 12 to 17, 94 to 96, and 118 to 121 each bind NAD(+); these read GASGRM, GTT, and ASNF. H150 (proton donor/acceptor) is an active-site residue. (S)-2,3,4,5-tetrahydrodipicolinate is bound at residue H151. K154 acts as the Proton donor in catalysis. Residue 160–161 participates in (S)-2,3,4,5-tetrahydrodipicolinate binding; that stretch reads GT.

The protein belongs to the DapB family.

It localises to the cytoplasm. The catalysed reaction is (S)-2,3,4,5-tetrahydrodipicolinate + NAD(+) + H2O = (2S,4S)-4-hydroxy-2,3,4,5-tetrahydrodipicolinate + NADH + H(+). It carries out the reaction (S)-2,3,4,5-tetrahydrodipicolinate + NADP(+) + H2O = (2S,4S)-4-hydroxy-2,3,4,5-tetrahydrodipicolinate + NADPH + H(+). It participates in amino-acid biosynthesis; L-lysine biosynthesis via DAP pathway; (S)-tetrahydrodipicolinate from L-aspartate: step 4/4. Catalyzes the conversion of 4-hydroxy-tetrahydrodipicolinate (HTPA) to tetrahydrodipicolinate. The sequence is that of 4-hydroxy-tetrahydrodipicolinate reductase from Stenotrophomonas maltophilia (strain K279a).